Consider the following 359-residue polypeptide: Prostaglandin F2-alpha receptor (359 aa).

The Extracellular segment spans residues 1 to 31 (MSMNNSKQLVSPAAALLSNTTCQTENRLSVF). Asn-4 and Asn-19 each carry an N-linked (GlcNAc...) asparagine glycan. The chain crosses the membrane as a helical span at residues 32–54 (FSVIFMTVGILSNSLAIAILMKA). The Cytoplasmic segment spans residues 55-69 (YQRFRQKSKASFLLL). A helical membrane pass occupies residues 70-90 (ASGLVITDFFGHLINGAIAVF). Over 91 to 109 (VYASDKEWIRFDQSNVLCS) the chain is Extracellular. An intrachain disulfide couples Cys-108 to Cys-186. The helical transmembrane segment at 110–131 (IFGICMVFSGLCPLLLGSVMAI) threads the bilayer. Residues 132–152 (ERCIGVTKPIFHSTKITSKHV) lie on the Cytoplasmic side of the membrane. The chain crosses the membrane as a helical span at residues 153–175 (KMMLSGVCLFAVFIALLPILGHR). The Extracellular portion of the chain corresponds to 176-198 (DYKIQASRTWCFYNTEDIKDWED). A helical membrane pass occupies residues 199-224 (RFYLLLFSFLGLLALGVSLLCNAITG). At 225–250 (ITLLRVKFKSQQHRQGRSHHLEMVIQ) the chain is on the cytoplasmic side. Residues 251–267 (LLAIMCVSCICWSPFLV) traverse the membrane as a helical segment. At 268-285 (TMANIGINGNHSLETCET) the chain is on the extracellular side. Residues 286-307 (TLFALRMATWNQILDPWVYILL) traverse the membrane as a helical segment. Over 308–359 (RKAVLKNLYKLASQCCGVHVISLHIWELSSIKNSLKVAAISESPVAEKSAST) the chain is Cytoplasmic.

This sequence belongs to the G-protein coupled receptor 1 family. Isoform 1 can form heterodimers with isoform 5 (and probably other isoforms). In terms of tissue distribution, eye.

It localises to the cell membrane. Functionally, receptor for prostaglandin F2-alpha (PGF2-alpha). The activity of this receptor is mediated by G proteins which activate a phosphatidylinositol-calcium second messenger system. Initiates luteolysis in the corpus luteum. Isoforms 2 to 7 do not bind PGF2-alpha but are proposed to modulate signaling by participating in variant receptor complexes; heterodimers between isoform 1 and isoform 5 are proposed to be a receptor for prostamides including the synthetic analog bimatoprost. The protein is Prostaglandin F2-alpha receptor (PTGFR) of Homo sapiens (Human).